A 295-amino-acid polypeptide reads, in one-letter code: Acetyl-coenzyme A carboxylase carboxyl transferase subunit beta (295 aa).

Residues 25–294 form the CoA carboxyltransferase N-terminal domain; that stretch reads VWTKCTSCEQ…PFNAEELSDT (270 aa). Cysteine 29, cysteine 32, cysteine 48, and cysteine 51 together coordinate Zn(2+). A C4-type zinc finger spans residues 29–51; that stretch reads CTSCEQVLYRDELKRHLEVCPKC.

This sequence belongs to the AccD/PCCB family. As to quaternary structure, acetyl-CoA carboxylase is a heterohexamer composed of biotin carboxyl carrier protein (AccB), biotin carboxylase (AccC) and two subunits each of ACCase subunit alpha (AccA) and ACCase subunit beta (AccD). Requires Zn(2+) as cofactor.

The protein resides in the cytoplasm. The catalysed reaction is N(6)-carboxybiotinyl-L-lysyl-[protein] + acetyl-CoA = N(6)-biotinyl-L-lysyl-[protein] + malonyl-CoA. It participates in lipid metabolism; malonyl-CoA biosynthesis; malonyl-CoA from acetyl-CoA: step 1/1. Its function is as follows. Component of the acetyl coenzyme A carboxylase (ACC) complex. Biotin carboxylase (BC) catalyzes the carboxylation of biotin on its carrier protein (BCCP) and then the CO(2) group is transferred by the transcarboxylase to acetyl-CoA to form malonyl-CoA. The protein is Acetyl-coenzyme A carboxylase carboxyl transferase subunit beta of Mannheimia succiniciproducens (strain KCTC 0769BP / MBEL55E).